Reading from the N-terminus, the 346-residue chain is UDP-N-acetylenolpyruvoylglucosamine reductase (346 aa).

An FAD-binding PCMH-type domain is found at 23–194; sequence FDVRARLACR…VSVTFRLPKV (172 aa). R170 is an active-site residue. S246 serves as the catalytic Proton donor. E342 is a catalytic residue.

It belongs to the MurB family. The cofactor is FAD.

It localises to the cytoplasm. It catalyses the reaction UDP-N-acetyl-alpha-D-muramate + NADP(+) = UDP-N-acetyl-3-O-(1-carboxyvinyl)-alpha-D-glucosamine + NADPH + H(+). It functions in the pathway cell wall biogenesis; peptidoglycan biosynthesis. Its function is as follows. Cell wall formation. The protein is UDP-N-acetylenolpyruvoylglucosamine reductase of Paraburkholderia phymatum (strain DSM 17167 / CIP 108236 / LMG 21445 / STM815) (Burkholderia phymatum).